We begin with the raw amino-acid sequence, 458 residues long: tRNA modification GTPase MnmE (458 aa).

The (6S)-5-formyl-5,6,7,8-tetrahydrofolate site is built by Arg-23, Glu-87, and Arg-126. The TrmE-type G domain occupies 224 to 380 (GLSMVIVGKP…LKSKIKDLFF (157 aa)). Asn-234 lines the K(+) pocket. GTP-binding positions include 234–239 (NVGKSS), 253–259 (TDIAGTT), and 278–281 (DTAG). Ser-238 provides a ligand contact to Mg(2+). K(+) contacts are provided by Thr-253, Ile-255, and Thr-258. Thr-259 serves as a coordination point for Mg(2+). Lys-458 serves as a coordination point for (6S)-5-formyl-5,6,7,8-tetrahydrofolate.

Belongs to the TRAFAC class TrmE-Era-EngA-EngB-Septin-like GTPase superfamily. TrmE GTPase family. In terms of assembly, homodimer. Heterotetramer of two MnmE and two MnmG subunits. It depends on K(+) as a cofactor.

Its subcellular location is the cytoplasm. Functionally, exhibits a very high intrinsic GTPase hydrolysis rate. Involved in the addition of a carboxymethylaminomethyl (cmnm) group at the wobble position (U34) of certain tRNAs, forming tRNA-cmnm(5)s(2)U34. This chain is tRNA modification GTPase MnmE, found in Clostridium perfringens (strain ATCC 13124 / DSM 756 / JCM 1290 / NCIMB 6125 / NCTC 8237 / Type A).